The following is a 274-amino-acid chain: 3-methyl-2-oxobutanoate hydroxymethyltransferase (274 aa).

Residues Asp44 and Asp83 each coordinate Mg(2+). 3-methyl-2-oxobutanoate is bound by residues 44-45, Asp83, and Lys113; that span reads DS. Glu115 contacts Mg(2+). Glu182 serves as the catalytic Proton acceptor.

The protein belongs to the PanB family. As to quaternary structure, homodecamer; pentamer of dimers. Mg(2+) is required as a cofactor.

The protein resides in the cytoplasm. It catalyses the reaction 3-methyl-2-oxobutanoate + (6R)-5,10-methylene-5,6,7,8-tetrahydrofolate + H2O = 2-dehydropantoate + (6S)-5,6,7,8-tetrahydrofolate. The protein operates within cofactor biosynthesis; (R)-pantothenate biosynthesis; (R)-pantoate from 3-methyl-2-oxobutanoate: step 1/2. Catalyzes the reversible reaction in which hydroxymethyl group from 5,10-methylenetetrahydrofolate is transferred onto alpha-ketoisovalerate to form ketopantoate. The chain is 3-methyl-2-oxobutanoate hydroxymethyltransferase from Campylobacter jejuni subsp. doylei (strain ATCC BAA-1458 / RM4099 / 269.97).